Here is a 242-residue protein sequence, read N- to C-terminus: Probable 2-phosphosulfolactate phosphatase (242 aa).

This sequence belongs to the ComB family. Requires Mg(2+) as cofactor.

The catalysed reaction is (2R)-O-phospho-3-sulfolactate + H2O = (2R)-3-sulfolactate + phosphate. The polypeptide is Probable 2-phosphosulfolactate phosphatase (Prochlorococcus marinus (strain NATL2A)).